Consider the following 301-residue polypeptide: Probable alpha-L-glutamate ligase (301 aa).

Residues 104 to 287 (LQLLSRKGIG…VAGMIFDFIE (184 aa)) form the ATP-grasp domain. Residues Lys141, 178–179 (EF), Asp187, and 211–213 (RSN) each bind ATP. Asp248, Glu260, and Asn262 together coordinate Mg(2+). Residues Asp248, Glu260, and Asn262 each coordinate Mn(2+).

It belongs to the RimK family. It depends on Mg(2+) as a cofactor. Requires Mn(2+) as cofactor.

The protein is Probable alpha-L-glutamate ligase of Vibrio parahaemolyticus serotype O3:K6 (strain RIMD 2210633).